The following is a 64-amino-acid chain: Large ribosomal subunit protein bL33 (64 aa).

A compositionally biased stretch (basic and acidic residues) spans 16-25; that stretch reads EARTSSEPRR. The disordered stretch occupies residues 16–41; sequence EARTSSEPRRSNGVSRYTTEKNKRNT.

This sequence belongs to the bacterial ribosomal protein bL33 family.

The sequence is that of Large ribosomal subunit protein bL33 from Prochlorococcus marinus subsp. pastoris (strain CCMP1986 / NIES-2087 / MED4).